The primary structure comprises 430 residues: Small ribosomal subunit protein uS5m (430 aa).

The 65-residue stretch at 218-282 (FDTRILEVRN…NRAVHHLHYI (65 aa)) folds into the S5 DRBM domain.

Belongs to the universal ribosomal protein uS5 family. As to quaternary structure, component of the mitochondrial small ribosomal subunit (mt-SSU). Mature mammalian 55S mitochondrial ribosomes consist of a small (28S) and a large (39S) subunit. The 28S small subunit contains a 12S ribosomal RNA (12S mt-rRNA) and 30 different proteins. The 39S large subunit contains a 16S rRNA (16S mt-rRNA), a copy of mitochondrial valine transfer RNA (mt-tRNA(Val)), which plays an integral structural role, and 52 different proteins.

The protein resides in the mitochondrion. This chain is Small ribosomal subunit protein uS5m (MRPS5), found in Homo sapiens (Human).